The primary structure comprises 746 residues: MEYTHQSSWIIPFIPLPVPILIGVGLLLFPTATKNLRRMWAFPSIFLLTIVMIFSIDLSIQQIENSSIYQYVWSWTINNDLSLEFGYLIDSLTSIMSILITTVGILVLIYSDSYMSHDQGYLRFFTYMSFFNTSMLGLVTSSNLIQVYIFWELVGMCSYLLIGFWFTRPIAANACQKAFVTNRVGDFGLLLGILGFYWITGSLEFRDLFQIFKNLIYKNEVNILFVTLCALLLFCGSVAKSAQFPLHVWLPDAMEGPTPISALIHAATMVAAGIFLVARLLPLFIVIPSIMSGIALIGIITVVLGATLAIAQKDIKKNLAYSTMSQLGYMMLALGMGSYRAALFHLITHAYSKALLFLGSGSIIHSMEAIVGYSPDKSQNMVLMGGLTKHAPITKMSFLIGTLSLCGIPPFACFWSKDEILNDSWLYSPIFAIIACSTAGLTAFYMFRIYLLVFEGYLNVHFQNFNGKKNSSFYSISLWGKEEKKKLKKKIHLLGFLTMNNNERTSFFRERTYSHRINRNVKSIRRLFLDSTHFGTKNLPFFYPHESDNTMLFSMLVLVLFTFFVGSIGISFSQEGIDLDILSKLLIPSIDLLHQNSKNSVDWYEFFINATFSVSIAFFGLFIASFFYKPVFSSLQNLNLFNLFQKNVPKKIISDKIINILYDWSYNRGYIDAFFEVSLIASVRKLAKFNYFFDRQLIDGIPNGVGISNFFIGEAIKYVGGGRISSYIFFFVLIFLLICYYIYLFP.

Helical transmembrane passes span 9 to 29 (WIIPFIPLPVPILIGVGLLLF), 40 to 60 (WAFPSIFLLTIVMIFSIDLSI), 89 to 109 (IDSLTSIMSILITTVGILVLI), 121 to 140 (YLRFFTYMSFFNTSMLGLVT), 147 to 167 (VYIFWELVGMCSYLLIGFWFT), 185 to 205 (GDFGLLLGILGFYWITGSLEF), 219 to 239 (NEVNILFVTLCALLLFCGSVA), 258 to 278 (TPISALIHAATMVAAGIFLVA), 280 to 300 (LLPLFIVIPSIMSGIALIGII), 327 to 347 (LGYMMLALGMGSYRAALFHLI), 354 to 374 (ALLFLGSGSIIHSMEAIVGYS), 396 to 416 (MSFLIGTLSLCGIPPFACFWS), 425 to 445 (WLYSPIFAIIACSTAGLTAFY), 552 to 572 (LFSMLVLVLFTFFVGSIGISF), 606 to 626 (FFINATFSVSIAFFGLFIASF), and 726 to 746 (SYIFFFVLIFLLICYYIYLFP).

The protein belongs to the complex I subunit 5 family. NDH is composed of at least 16 different subunits, 5 of which are encoded in the nucleus.

It is found in the plastid. The protein resides in the chloroplast thylakoid membrane. The enzyme catalyses a plastoquinone + NADH + (n+1) H(+)(in) = a plastoquinol + NAD(+) + n H(+)(out). It carries out the reaction a plastoquinone + NADPH + (n+1) H(+)(in) = a plastoquinol + NADP(+) + n H(+)(out). Functionally, NDH shuttles electrons from NAD(P)H:plastoquinone, via FMN and iron-sulfur (Fe-S) centers, to quinones in the photosynthetic chain and possibly in a chloroplast respiratory chain. The immediate electron acceptor for the enzyme in this species is believed to be plastoquinone. Couples the redox reaction to proton translocation, and thus conserves the redox energy in a proton gradient. The protein is NAD(P)H-quinone oxidoreductase subunit 5, chloroplastic (ndhF) of Vicia faba (Broad bean).